The sequence spans 268 residues: MSNKVHLGHTARKRFGQNFLTDGNVIDRIVGAISPDNHHVMVEIGPGLGALTEPVAEAVDNLTVVELDRDLVERLHHHPVLKDKLTIHQGDALQFDFGQLSVPGKKMKVFGNLPYNISTPLMFHLFEFAEQIETMHFMLQKEVVLRLSASPGCKAYGRLTVMAQYFCQVVPVLEVPPHSFTPAPKVDSAVVRLLPYAVKPFPCKDVTVLRHLCTTAFNMRRKTLRNNLKHMLSDDEFEQLGIDSSQRPEQISVQQYVAMANMVCDKKA.

Asn18, Leu20, Gly45, Glu66, Asp91, and Asn112 together coordinate S-adenosyl-L-methionine.

Belongs to the class I-like SAM-binding methyltransferase superfamily. rRNA adenine N(6)-methyltransferase family. RsmA subfamily.

The protein localises to the cytoplasm. It carries out the reaction adenosine(1518)/adenosine(1519) in 16S rRNA + 4 S-adenosyl-L-methionine = N(6)-dimethyladenosine(1518)/N(6)-dimethyladenosine(1519) in 16S rRNA + 4 S-adenosyl-L-homocysteine + 4 H(+). In terms of biological role, specifically dimethylates two adjacent adenosines (A1518 and A1519) in the loop of a conserved hairpin near the 3'-end of 16S rRNA in the 30S particle. May play a critical role in biogenesis of 30S subunits. In Shewanella baltica (strain OS223), this protein is Ribosomal RNA small subunit methyltransferase A.